The sequence spans 186 residues: uncharacterized protein (186 aa).

This is an uncharacterized protein from Saccharomyces cerevisiae (strain ATCC 204508 / S288c) (Baker's yeast).